A 501-amino-acid polypeptide reads, in one-letter code: Lysine--tRNA ligase (501 aa).

Glu-402 and Glu-409 together coordinate Mg(2+).

The protein belongs to the class-II aminoacyl-tRNA synthetase family. In terms of assembly, homodimer. The cofactor is Mg(2+).

The protein localises to the cytoplasm. The catalysed reaction is tRNA(Lys) + L-lysine + ATP = L-lysyl-tRNA(Lys) + AMP + diphosphate. The polypeptide is Lysine--tRNA ligase (Helicobacter pylori (strain HPAG1)).